We begin with the raw amino-acid sequence, 1133 residues long: DNA-directed RNA polymerase subunit beta (1133 aa).

Residues 1085 to 1133 (ADVSSRHTPSRPTYESVTSEDLSPAAGGTFTLARRSREEDEDREEEDDF) form a disordered region. Over residues 1090-1105 (RHTPSRPTYESVTSED) the composition is skewed to polar residues. A compositionally biased stretch (acidic residues) spans 1123 to 1133 (EDEDREEEDDF).

It belongs to the RNA polymerase beta chain family. In cyanobacteria the RNAP catalytic core is composed of 2 alpha, 1 beta, 1 beta', 1 gamma and 1 omega subunit. When a sigma factor is associated with the core the holoenzyme is formed, which can initiate transcription.

The enzyme catalyses RNA(n) + a ribonucleoside 5'-triphosphate = RNA(n+1) + diphosphate. Its function is as follows. DNA-dependent RNA polymerase catalyzes the transcription of DNA into RNA using the four ribonucleoside triphosphates as substrates. In Synechococcus sp. (strain JA-3-3Ab) (Cyanobacteria bacterium Yellowstone A-Prime), this protein is DNA-directed RNA polymerase subunit beta.